The sequence spans 456 residues: uncharacterized protein (456 aa).

The 59-residue stretch at 2-60 (AMRKGKEYELNIEEIEFPSMGIAYHEGLKVYVKHGIPGQKVLARITTKKKDHAKGKIIE) folds into the TRAM domain. [4Fe-4S] cluster-binding residues include Cys-73, Cys-79, Cys-82, and Cys-162. Gln-288, Tyr-317, Glu-338, and Asp-383 together coordinate S-adenosyl-L-methionine. The active-site Nucleophile is the Cys-410.

The protein belongs to the class I-like SAM-binding methyltransferase superfamily. RNA M5U methyltransferase family.

This is an uncharacterized protein from Clostridium tetani (strain Massachusetts / E88).